The following is a 205-amino-acid chain: Imidazole glycerol phosphate synthase subunit HisH (205 aa).

Positions 1–205 constitute a Glutamine amidotransferase type-1 domain; that stretch reads MIALVDYGGG…FFKMALGDKK (205 aa). The active-site Nucleophile is the C79. Residues H181 and E183 contribute to the active site.

Heterodimer of HisH and HisF.

Its subcellular location is the cytoplasm. The enzyme catalyses 5-[(5-phospho-1-deoxy-D-ribulos-1-ylimino)methylamino]-1-(5-phospho-beta-D-ribosyl)imidazole-4-carboxamide + L-glutamine = D-erythro-1-(imidazol-4-yl)glycerol 3-phosphate + 5-amino-1-(5-phospho-beta-D-ribosyl)imidazole-4-carboxamide + L-glutamate + H(+). The catalysed reaction is L-glutamine + H2O = L-glutamate + NH4(+). The protein operates within amino-acid biosynthesis; L-histidine biosynthesis; L-histidine from 5-phospho-alpha-D-ribose 1-diphosphate: step 5/9. Its function is as follows. IGPS catalyzes the conversion of PRFAR and glutamine to IGP, AICAR and glutamate. The HisH subunit catalyzes the hydrolysis of glutamine to glutamate and ammonia as part of the synthesis of IGP and AICAR. The resulting ammonia molecule is channeled to the active site of HisF. The protein is Imidazole glycerol phosphate synthase subunit HisH of Dehalococcoides mccartyi (strain ATCC BAA-2266 / KCTC 15142 / 195) (Dehalococcoides ethenogenes (strain 195)).